The chain runs to 474 residues: Cysteine--tRNA ligase (474 aa).

Cys-30 is a Zn(2+) binding site. A 'HIGH' region motif is present at residues 32-42 (PTVYNFAHIGN). The Zn(2+) site is built by Cys-212, His-237, and Glu-241. The 'KMSKS' region signature appears at 270 to 274 (KMSKS). Lys-273 contacts ATP.

It belongs to the class-I aminoacyl-tRNA synthetase family. As to quaternary structure, monomer. It depends on Zn(2+) as a cofactor.

Its subcellular location is the cytoplasm. The catalysed reaction is tRNA(Cys) + L-cysteine + ATP = L-cysteinyl-tRNA(Cys) + AMP + diphosphate. This is Cysteine--tRNA ligase from Leptospira borgpetersenii serovar Hardjo-bovis (strain JB197).